We begin with the raw amino-acid sequence, 271 residues long: Bifunctional protein FolD (271 aa).

NADP(+)-binding positions include 154 to 156 (GRS), Thr181, and Ile222.

The protein belongs to the tetrahydrofolate dehydrogenase/cyclohydrolase family. In terms of assembly, homodimer.

It carries out the reaction (6R)-5,10-methylene-5,6,7,8-tetrahydrofolate + NADP(+) = (6R)-5,10-methenyltetrahydrofolate + NADPH. It catalyses the reaction (6R)-5,10-methenyltetrahydrofolate + H2O = (6R)-10-formyltetrahydrofolate + H(+). The protein operates within one-carbon metabolism; tetrahydrofolate interconversion. Its function is as follows. Catalyzes the oxidation of 5,10-methylenetetrahydrofolate to 5,10-methenyltetrahydrofolate and then the hydrolysis of 5,10-methenyltetrahydrofolate to 10-formyltetrahydrofolate. The polypeptide is Bifunctional protein FolD (Thermosipho melanesiensis (strain DSM 12029 / CIP 104789 / BI429)).